The following is a 280-amino-acid chain: Shikimate dehydrogenase (NADP(+)) (280 aa).

Residues 20–22 (SLS) and T67 contribute to the shikimate site. The Proton acceptor role is filled by K71. Residues N92 and D107 each coordinate shikimate. Residues 131 to 135 (GAGGA) and G220 contribute to the NADP(+) site. Y222 contributes to the shikimate binding site. Residue G243 coordinates NADP(+).

Belongs to the shikimate dehydrogenase family. As to quaternary structure, homodimer.

The enzyme catalyses shikimate + NADP(+) = 3-dehydroshikimate + NADPH + H(+). It participates in metabolic intermediate biosynthesis; chorismate biosynthesis; chorismate from D-erythrose 4-phosphate and phosphoenolpyruvate: step 4/7. Its function is as follows. Involved in the biosynthesis of the chorismate, which leads to the biosynthesis of aromatic amino acids. Catalyzes the reversible NADPH linked reduction of 3-dehydroshikimate (DHSA) to yield shikimate (SA). The sequence is that of Shikimate dehydrogenase (NADP(+)) from Maricaulis maris (strain MCS10) (Caulobacter maris).